The sequence spans 320 residues: Lipoyl synthase (320 aa).

Positions 67, 72, 78, 93, 97, 100, and 307 each coordinate [4Fe-4S] cluster. One can recognise a Radical SAM core domain in the interval 79–296; the sequence is FNHGTATFMI…GVIAKEIGFT (218 aa).

This sequence belongs to the radical SAM superfamily. Lipoyl synthase family. Requires [4Fe-4S] cluster as cofactor.

The protein localises to the cytoplasm. The enzyme catalyses [[Fe-S] cluster scaffold protein carrying a second [4Fe-4S](2+) cluster] + N(6)-octanoyl-L-lysyl-[protein] + 2 oxidized [2Fe-2S]-[ferredoxin] + 2 S-adenosyl-L-methionine + 4 H(+) = [[Fe-S] cluster scaffold protein] + N(6)-[(R)-dihydrolipoyl]-L-lysyl-[protein] + 4 Fe(3+) + 2 hydrogen sulfide + 2 5'-deoxyadenosine + 2 L-methionine + 2 reduced [2Fe-2S]-[ferredoxin]. It participates in protein modification; protein lipoylation via endogenous pathway; protein N(6)-(lipoyl)lysine from octanoyl-[acyl-carrier-protein]: step 2/2. Catalyzes the radical-mediated insertion of two sulfur atoms into the C-6 and C-8 positions of the octanoyl moiety bound to the lipoyl domains of lipoate-dependent enzymes, thereby converting the octanoylated domains into lipoylated derivatives. In Pseudoalteromonas atlantica (strain T6c / ATCC BAA-1087), this protein is Lipoyl synthase.